The chain runs to 2474 residues: Polyprotein P1234 (2474 aa).

The Alphavirus-like MT domain maps to glutamate 28–histidine 257. The nsP1 membrane-binding stretch occupies residues glycine 242–valine 261. Residue cysteine 417 is the site of S-palmitoyl cysteine; by host attachment. The (+)RNA virus helicase ATP-binding domain occupies cysteine 674 to lysine 839. Glycine 719–serine 726 is an a ribonucleoside 5'-triphosphate binding site. Residues serine 840–alanine 988 enclose the (+)RNA virus helicase C-terminal domain. The Peptidase C9 domain occupies aspartate 1001–serine 1320. The segment at valine 1002 to threonine 1021 is nucleolus localization signal. The For cysteine protease nsP2 activity role is filled by cysteine 1010. Positions threonine 1054 to serine 1063 match the Nuclear export signal motif. Histidine 1079 (for cysteine protease nsP2 activity) is an active-site residue. A Nuclear localization signal motif is present at residues proline 1177–valine 1181. Positions alanine 1328 to glutamate 1486 constitute a Macro domain. 6 residues coordinate ADP-D-ribose: aspartate 1337, asparagine 1351, glycine 1359, glycine 1438, isoleucine 1439, and tyrosine 1440. Zn(2+) contacts are provided by cysteine 1589, cysteine 1591, cysteine 1614, and cysteine 1632. Positions leucine 1773–asparagine 1785 are binding to host G3BP family members. The segment at threonine 1820–valine 1841 is disordered. Residues proline 1838–isoleucine 1854 are binding to host FXR family members. One can recognise a RdRp catalytic domain in the interval aspartate 2231–alanine 2346.

As to quaternary structure, interacts with non-structural protein 3. Interacts with RNA-directed RNA polymerase nsP4. Interacts with protease nsP2. interacts with itself. Interacts with mRNA-capping enzyme nsP1. Interacts with host DDX1. Interacts with host DDX3. Interacts (via C-terminus) with host FXR1; this interaction inhibits the formation of host stress granules on viral mRNAs and the nsp3-FXR1 complexes bind viral RNAs and probably orchestrate the assembly of viral replication complexes. Interacts (via C-terminus) with host FXR2; this interaction inhibits the formation of host stress granules on viral mRNAs and the nsp3-FXR2 complexes bind viral RNAs and probably orchestrate the assembly of viral replication complexes. Interacts (via C-terminus) with host FMR1; this interaction inhibits the formation of host stress granules on viral mRNAs and the nsp3-FMR1 complexes bind viral RNAs and probably orchestrate the assembly of viral replication complexes. Interacts (via C-terminus) with host G3BP1; this interaction inhibits the formation of host stress granules on viral mRNAs and the nsp3-G3BP1 complexes bind viral RNAs and probably orchestrate the assembly of viral replication complexes. Interacts (via C-terminus) with host G3BP2; this interaction inhibits the formation of host stress granules on viral mRNAs and the nsp3-G3BP2 complexes bind viral RNAs and probably orchestrate the assembly of viral replication complexes. In terms of assembly, interacts with mRNA-capping enzyme nsP1. Interacts with protease nsP2. interacts with itself. As to quaternary structure, interacts with RNA-directed RNA polymerase nsP4. Interacts with mRNA-capping enzyme nsP1. Interacts with KPNA1/karyopherin-alpha1; this interaction probably allows the active transport of protease nsP2 into the host nucleus. Mg(2+) is required as a cofactor. The cofactor is Mn(2+). Post-translationally, specific enzymatic cleavages in vivo yield mature proteins. The processing of the polyprotein is temporally regulated. In early stages (1.7 hpi), P1234 is first cleaved in trans through its nsP2 protease activity, releasing P123' and nsP4, which associate to form the early replication complex. At the same time, P1234 is also cut at the nsP1/nsP2 site early in infection but with lower efficiency. After replication of the viral minus-strand RNAs (4 hpi), the polyproteins are cut at the nsP1/nsP2 and nsP2/nsP3 sites very efficiently, preventing accumulation of P123' and P1234 and allowing the formation of the late replication complex. NsP3'/nsP4 site is not cleaved anymore and P34 is produced rather than nsP4. Specific enzymatic cleavages in vivo yield mature proteins. The processing of the polyprotein is temporally regulated. In early stages (1.7 hpi), P123 is cleaved at the nsP1/nsP2 site with low efficiency. After replication of the viral minus-strand RNAs (4 hpi), the polyproteins are cut at the nsP1/nsP2 and nsP2/nsP3 sites very efficiently, preventing accumulation of P123 and allowing the formation of the late replication complex. In terms of processing, specific enzymatic cleavages in vivo yield mature proteins. The processing of the polyprotein is temporally regulated. In early stages (1.7 hpi), P123' is cleaved at the nsP1/nsP2 site with low efficiency. After replication of the viral minus-strand RNAs (4 hpi), the polyproteins are cut at the nsP1/nsP2 and nsP2/nsP3 sites very efficiently, preventing accumulation of P123' and allowing the formation of the late replication complex. Post-translationally, palmitoylated by host palmitoyltransferases ZDHHC2 and ZDHHC19. Phosphorylated by host on serines and threonines. In terms of processing, ubiquitinated; targets the protein for rapid degradation via the ubiquitin system. Nsp4 is present in extremely low quantities due to low frequency of translation through the amber stop-codon and the degradation by the ubiquitin pathway.

The protein localises to the host cytoplasmic vesicle membrane. It localises to the host cell membrane. It is found in the host cell projection. Its subcellular location is the host filopodium. The protein resides in the host nucleus. The protein localises to the host cytoplasm. The enzyme catalyses GTP + S-adenosyl-L-methionine = N(7)-methyl-GTP + S-adenosyl-L-homocysteine. The catalysed reaction is N(7)-methyl-GTP + L-histidyl-[protein] = N(tele)-(N(7)-methylguanosine 5'-phospho)-L-histidyl-[protein] + diphosphate. It catalyses the reaction N(tele)-(N(7)-methylguanosine 5'-phospho)-L-histidyl-[protein] + a 5'-end diphospho-(purine-ribonucleoside) in mRNA + H(+) = a 5'-end (N(7)-methyl 5'-triphosphoguanosine)-(purine-ribonucleoside) in mRNA + L-histidyl-[protein]. It carries out the reaction a 5'-end triphospho-ribonucleoside in mRNA + H2O = a 5'-end diphospho-ribonucleoside in mRNA + phosphate + H(+). The enzyme catalyses a ribonucleoside 5'-triphosphate + H2O = a ribonucleoside 5'-diphosphate + phosphate + H(+). The catalysed reaction is ATP + H2O = ADP + phosphate + H(+). It catalyses the reaction RNA(n) + a ribonucleoside 5'-triphosphate = RNA(n+1) + diphosphate. It carries out the reaction 4-O-(ADP-D-ribosyl)-L-aspartyl-[protein] + H2O = L-aspartyl-[protein] + ADP-D-ribose + H(+). The enzyme catalyses 5-O-(ADP-D-ribosyl)-L-glutamyl-[protein] + H2O = L-glutamyl-[protein] + ADP-D-ribose + H(+). The catalysed reaction is RNA(n) + ATP = RNA(n)-3'-adenine ribonucleotide + diphosphate. It catalyses the reaction ADP-alpha-D-ribose 1''-phosphate + H2O = ADP-D-ribose + phosphate. Its activity is regulated as follows. Inhibited by sinefungin. Its function is as follows. Inactive precursor of the viral replicase, which is activated by cleavages carried out by the viral protease nsP2. In terms of biological role, the early replication complex formed by the polyprotein P123 and nsP4 synthesizes the minus-strand RNAs (antigenome). Polyprotein P123 is a short-lived polyprotein that accumulates during early stage of infection. As soon P123 is cleaved into mature proteins, the plus-strand RNAs synthesis begins. Functionally, the early replication complex formed by the polyprotein P123' and nsP4 synthesizes minus-strand RNAs (antigenome). Polyprotein P123' is a short-lived polyprotein that accumulates during early stage of infection. As soon P123' is cleaved into mature proteins, the plus-strand RNAs synthesis begins. Cytoplasmic capping enzyme that catalyzes two virus-specific reactions: methyltransferase and nsP1 guanylyltransferase. mRNA-capping is necessary since all viral RNAs are synthesized in the cytoplasm, and host capping enzymes are restricted to the nucleus. The enzymatic reaction involves a covalent link between 7-methyl-GMP and nsP1, whereas eukaryotic capping enzymes form a covalent complex only with GMP. NsP1 capping consists in the following reactions: GTP is first methylated into 7-methyl-GMP and then is covalently linked to nsP1 to form the m7GMp-nsP1 complex from which 7-methyl-GMP complex is transferred to the mRNA to create the cap structure. NsP1 is also needed for the initiation of the minus-strand RNAs synthesis. Probably serves as a membrane anchor for the replication complex composed of nsP1-nsP4. Nsp1 is needed for the initiation of the minus-strand RNAs synthesis. Palmitoylated nsP1 is remodeling host cell cytoskeleton, and induces filopodium-like structure formation at the surface of the host cell. Its function is as follows. Multifunctional protein whose N-terminus is part of the RNA polymerase complex and displays NTPase, RNA triphosphatase and helicase activities. NTPase and RNA triphosphatase are involved in viral RNA capping and helicase keeps a check on the dsRNA replication intermediates. The C-terminus harbors a protease that specifically cleaves the polyproteins and releases the mature proteins. Required for the shutoff of minus-strand RNAs synthesis. Inhibits host translation to ensure maximal viral gene expression and evade host immune response. In terms of biological role, seems to be essential for minus-strand RNAs and subgenomic 26S mRNAs synthesis. Displays mono-ADP-ribosylhydrolase activity. ADP-ribosylation is a post-translational modification that controls various processes of the host cell and the virus probably needs to revert it for optimal viral replication. Binds proteins of FXR and G3BP families and sequesters them into the viral RNA replication complexes thereby inhibiting the formation of host stress granules on viral mRNAs. The nsp3-FXR and nsp3-G3BP complexes bind viral RNAs and probably orchestrate the assembly of viral replication complexes, thanks to the ability of G3BP and FXR family members to self-assemble and bind DNA. Functionally, seems to be essential for minus-strand RNAs and subgenomic 26S mRNAs synthesis. Displays mono-ADP-ribosylhydrolase activity. ADP-ribosylation is a post-translational modification that controls various processes of the host cell and the virus probably needs to revert it for optimal viral replication. Binds proteins of FXR and G3BP families and sequesters them into the viral RNA replication complexes thereby inhibiting the formation of host stress granules on viral mRNAs. The nsp3'-FXR and nsp3-G3BP complexes bind viral RNAs and probably orchestrate the assembly of viral replication complexes, thanks to the ability of G3BP and FXR family members to self-assemble and bind DNA. RNA dependent RNA polymerase. Replicates genomic and antigenomic RNA by recognizing replications specific signals. The early replication complex formed by the polyprotein P123 and nsP4 synthesizes minus-strand RNAs. The late replication complex composed of fully processed nsP1-nsP4 is responsible for the production of genomic and subgenomic plus-strand RNAs. In Eastern equine encephalitis virus (strain PE-3.0815) (EEEV), this protein is Polyprotein P1234.